Consider the following 477-residue polypeptide: Glutamate--tRNA ligase (477 aa).

Residues 8-18 (PSPTGTLHIGT) carry the 'HIGH' region motif. The 'KMSKS' region signature appears at 247 to 251 (KLSKR). K250 contacts ATP.

The protein belongs to the class-I aminoacyl-tRNA synthetase family. Glutamate--tRNA ligase type 1 subfamily. In terms of assembly, monomer.

The protein resides in the cytoplasm. It catalyses the reaction tRNA(Glu) + L-glutamate + ATP = L-glutamyl-tRNA(Glu) + AMP + diphosphate. In terms of biological role, catalyzes the attachment of glutamate to tRNA(Glu) in a two-step reaction: glutamate is first activated by ATP to form Glu-AMP and then transferred to the acceptor end of tRNA(Glu). The chain is Glutamate--tRNA ligase from Synechococcus sp. (strain CC9605).